A 243-amino-acid polypeptide reads, in one-letter code: Ubiquinone/menaquinone biosynthesis C-methyltransferase UbiE (243 aa).

Residues threonine 69, aspartate 90, and 116–117 (DA) contribute to the S-adenosyl-L-methionine site.

Belongs to the class I-like SAM-binding methyltransferase superfamily. MenG/UbiE family.

It catalyses the reaction a 2-demethylmenaquinol + S-adenosyl-L-methionine = a menaquinol + S-adenosyl-L-homocysteine + H(+). The enzyme catalyses a 2-methoxy-6-(all-trans-polyprenyl)benzene-1,4-diol + S-adenosyl-L-methionine = a 5-methoxy-2-methyl-3-(all-trans-polyprenyl)benzene-1,4-diol + S-adenosyl-L-homocysteine + H(+). It functions in the pathway quinol/quinone metabolism; menaquinone biosynthesis; menaquinol from 1,4-dihydroxy-2-naphthoate: step 2/2. Its pathway is cofactor biosynthesis; ubiquinone biosynthesis. Functionally, methyltransferase required for the conversion of demethylmenaquinol (DMKH2) to menaquinol (MKH2) and the conversion of 2-polyprenyl-6-methoxy-1,4-benzoquinol (DDMQH2) to 2-polyprenyl-3-methyl-6-methoxy-1,4-benzoquinol (DMQH2). The protein is Ubiquinone/menaquinone biosynthesis C-methyltransferase UbiE of Paraburkholderia phymatum (strain DSM 17167 / CIP 108236 / LMG 21445 / STM815) (Burkholderia phymatum).